The sequence spans 121 residues: Small ribosomal subunit protein uS13 (121 aa).

The tract at residues 93–121 (RGLPVRGQNTKNNARTRKGPRRTVANKKK) is disordered. Over residues 106 to 121 (ARTRKGPRRTVANKKK) the composition is skewed to basic residues.

Belongs to the universal ribosomal protein uS13 family. In terms of assembly, part of the 30S ribosomal subunit. Forms a loose heterodimer with protein S19. Forms two bridges to the 50S subunit in the 70S ribosome.

Its function is as follows. Located at the top of the head of the 30S subunit, it contacts several helices of the 16S rRNA. In the 70S ribosome it contacts the 23S rRNA (bridge B1a) and protein L5 of the 50S subunit (bridge B1b), connecting the 2 subunits; these bridges are implicated in subunit movement. Contacts the tRNAs in the A and P-sites. The sequence is that of Small ribosomal subunit protein uS13 from Bacillus licheniformis (strain ATCC 14580 / DSM 13 / JCM 2505 / CCUG 7422 / NBRC 12200 / NCIMB 9375 / NCTC 10341 / NRRL NRS-1264 / Gibson 46).